The following is a 60-amino-acid chain: Acidic phospholipase A2 (60 aa).

3 residues coordinate Ca(2+): Y27, G29, and G31. A disulfide bridge connects residues C28 and C44. H47 is an active-site residue. Ca(2+) is bound at residue D48.

It belongs to the phospholipase A2 family. Group II subfamily. D49 sub-subfamily. As to quaternary structure, monomer. Ca(2+) serves as cofactor. As to expression, expressed by the venom gland.

The protein localises to the secreted. The catalysed reaction is a 1,2-diacyl-sn-glycero-3-phosphocholine + H2O = a 1-acyl-sn-glycero-3-phosphocholine + a fatty acid + H(+). Functionally, snake venom phospholipase A2 (PLA2) that exhibits an indirect hemolytic activity, a low myotoxicity, and induces edema. In addition, this enzyme has been shown to induce the release of some pro- and anti-inflammatory cytokines from human PBMC (IL12B, TNF-alpha, IL1B and IL6 but not variation has been observed for IL-8 and IL-10). PLA2 catalyzes the calcium-dependent hydrolysis of the 2-acyl groups in 3-sn-phosphoglycerides. This is Acidic phospholipase A2 from Bothrops leucurus (Whitetail lancehead).